Reading from the N-terminus, the 357-residue chain is U3 small nucleolar ribonucleoprotein protein LCP5 (357 aa).

At Ser-2 the chain carries N-acetylserine. Disordered regions lie at residues 146 to 211 (STLV…YKPP) and 301 to 357 (NKAE…QRRL). Acidic residues predominate over residues 155–166 (DDSEDDESSEDE). Positions 171 to 183 (PNTSGIINTNKKS) are enriched in polar residues. 2 stretches are compositionally biased toward basic and acidic residues: residues 187 to 196 (RVEETAKQEN) and 348 to 357 (SAWDRAQRRL).

The protein resides in the nucleus. Its subcellular location is the nucleolus. In terms of biological role, component of the U3 small nucleolar ribonucleoprotein. Required for the early cleavages at sites A0, A1 and A2 of the pre-ribosomal RNA. Participates in ribosome biogenesis. This Saccharomyces cerevisiae (strain ATCC 204508 / S288c) (Baker's yeast) protein is U3 small nucleolar ribonucleoprotein protein LCP5 (LCP5).